A 121-amino-acid polypeptide reads, in one-letter code: Auxin-responsive protein SAUR32 (121 aa).

The protein belongs to the ARG7 family. In terms of tissue distribution, expressed in roots, leaves and stems.

The protein localises to the nucleus. It is found in the cytoplasm. In terms of biological role, may play a role in the apical hook development. The chain is Auxin-responsive protein SAUR32 from Arabidopsis thaliana (Mouse-ear cress).